A 270-amino-acid chain; its full sequence is MSTGNIEAGVYYESDGSDEHIKKLREYFEKIKEEYSESFGDDLLGFTVNPVKPQSFEFILVGNDDIGLHSYVEVKLQEGIVLGKITSIFAYDMGFFANPFTSQESSVFAPVEDFKTIFSKGKDDEWKKAAIYAYLNNNGNKLKIATADVIGILKDGKLDILRNPFHVGEPVYKISEKTLGKILKKNFSGRDMEVPVKVGVIENSDIDVFVDANEVISKHMLVLGTTGSGKSYFTKRFISSLLESDKEVEVYVLDPHGEYFNDLKSYIDEN.

This is an uncharacterized protein from Aquifex aeolicus (strain VF5).